The following is a 281-amino-acid chain: L-cysteine S-thiosulfotransferase subunit SoxA (281 aa).

Positions 1 to 25 (MTKHGFLLATLVLAGATLPIGPVTA) are cleaved as a signal peptide. An intrachain disulfide couples Cys99 to Cys130. The Cytochrome c domain occupies 175–281 (AAYEQGKRFY…LELNGPGARK (107 aa)). Heme is bound by residues Cys195 and His199. Arg238 contacts substrate. Cys242 lines the heme pocket. Cys242 functions as the Cysteine persulfide intermediate in the catalytic mechanism.

It belongs to the SoxA family. Heterodimer of SoxA and SoxX. Requires heme as cofactor. In terms of processing, cysteine persulfide at Cys-242.

It is found in the periplasm. It carries out the reaction L-cysteinyl-[SoxY protein] + thiosulfate + 2 Fe(III)-[cytochrome c] = S-sulfosulfanyl-L-cysteinyl-[SoxY protein] + 2 Fe(II)-[cytochrome c] + 2 H(+). The catalysed reaction is S-sulfanyl-L-cysteinyl-[SoxY protein] + thiosulfate + 2 Fe(III)-[cytochrome c] = S-(2-sulfodisulfanyl)-L-cysteinyl-[SoxY protein] + 2 Fe(II)-[cytochrome c] + 2 H(+). Its function is as follows. C-type monoheme cytochrome, which is part of the SoxAX cytochrome complex involved in sulfur oxidation. The SoxAX complex catalyzes the formation of a heterodisulfide bond between the conserved cysteine residue on a sulfur carrier SoxYZ complex subunit SoxY and thiosulfate or other inorganic sulfur substrates. This leads to the intermediary formation of conspicuous sulfur globules inside of the cells. This is L-cysteine S-thiosulfotransferase subunit SoxA from Allochromatium vinosum (Chromatium vinosum).